We begin with the raw amino-acid sequence, 1771 residues long: Fatty acid synthase alpha subunit pkiB (1771 aa).

Over residues 108 to 130 (SQPTQPQFEPTSPSHLTKRSPSP) the composition is skewed to polar residues. The interval 108–133 (SQPTQPQFEPTSPSHLTKRSPSPSKA) is disordered. Residues 143–221 (ELTLQAGHVI…ESFQPEFSGI (79 aa)) form the Carrier domain. At S181 the chain carries O-(pantetheine 4'-phosphoryl)serine. Residues 575–771 (HKAVLVTGAG…CGAVIGWTRG (197 aa)) form a beta-ketoacyl reductase region. The Ketosynthase family 3 (KS3) domain occupies 1011-1531 (KELLHEVAVE…QKGAINIMVS (521 aa)). Catalysis depends on for beta-ketoacyl synthase activity residues C1197, H1416, and H1457. D1650, V1651, and E1652 together coordinate Mg(2+). Acetyl-CoA-binding positions include 1650–1652 (DVE), Y1676, S1686, 1695–1705 (EAAFKSLQTTS), 1719–1722 (EVGG), and 1753–1755 (ISH). The Mg(2+) site is built by S1754 and H1755.

The protein belongs to the thiolase-like superfamily. Fungal fatty acid synthetase subunit alpha family. [Alpha(6)beta(6)] hexamers of two multifunctional subunits (alpha and beta).

The catalysed reaction is acetyl-CoA + n malonyl-CoA + 2n NADPH + 4n H(+) = a long-chain-acyl-CoA + n CoA + n CO2 + 2n NADP(+).. It catalyses the reaction a fatty acyl-[ACP] + malonyl-[ACP] + H(+) = a 3-oxoacyl-[ACP] + holo-[ACP] + CO2. The enzyme catalyses a (3R)-hydroxyacyl-[ACP] + NADP(+) = a 3-oxoacyl-[ACP] + NADPH + H(+). The protein operates within secondary metabolite biosynthesis. Fatty acid synthase alpha subunit; part of the pki gene cluster that mediates the biosynthesis of 2,4-dihydroxy-3-methyl-6-(2-oxoundecyl)benzaldehyde. The first step in the pathway is the generation of the decanoyl starter unit by the FAS composed of subunits pkiB and pkiC, which is then transferred directly from the FAS to the SAT domain of the non-reducing polyketide synthase pkiA. PkiA condenses the decanoyyl starter unit with 4 malonyl-CoA units and performs one methylation step to yield 2,4-dihydroxy-3-methyl-6-(2-oxoundecyl)benzaldehyde. The protein is Fatty acid synthase alpha subunit pkiB of Emericella nidulans (strain FGSC A4 / ATCC 38163 / CBS 112.46 / NRRL 194 / M139) (Aspergillus nidulans).